Consider the following 385-residue polypeptide: GTPase Obg (385 aa).

One can recognise an Obg domain in the interval Met1–Leu159. The OBG-type G domain maps to Ala160–Glu333. GTP contacts are provided by residues Gly166–Ser173, Phe191–Ile195, Asp213–Gly216, Asn283–Asp286, and Ser314–Ile316. Mg(2+) is bound by residues Ser173 and Thr193.

The protein belongs to the TRAFAC class OBG-HflX-like GTPase superfamily. OBG GTPase family. Monomer. Mg(2+) is required as a cofactor.

The protein localises to the cytoplasm. Its function is as follows. An essential GTPase which binds GTP, GDP and possibly (p)ppGpp with moderate affinity, with high nucleotide exchange rates and a fairly low GTP hydrolysis rate. Plays a role in control of the cell cycle, stress response, ribosome biogenesis and in those bacteria that undergo differentiation, in morphogenesis control. The sequence is that of GTPase Obg from Pseudoalteromonas translucida (strain TAC 125).